The primary structure comprises 463 residues: Chromosomal replication initiator protein DnaA (463 aa).

The tract at residues 1 to 83 (MSTNQIILTD…LQLFQHYNNT (83 aa)) is domain I, interacts with DnaA modulators. Positions 83 to 124 (TIKSIEIITKELPGITQTVIALPTKTFADIGSSELNAENIFS) are domain II. A domain III, AAA+ region region spans residues 125-343 (TLDVRFTFDN…GALNKVIAHS (219 aa)). Positions 171, 173, 174, and 175 each coordinate ATP. Residues 344–463 (NFTLKEITLE…INLLMKILQN (120 aa)) are domain IV, binds dsDNA.

The protein belongs to the DnaA family. As to quaternary structure, oligomerizes as a right-handed, spiral filament on DNA at oriC.

It localises to the cytoplasm. Plays an essential role in the initiation and regulation of chromosomal replication. ATP-DnaA binds to the origin of replication (oriC) to initiate formation of the DNA replication initiation complex once per cell cycle. Binds the DnaA box (a 9 base pair repeat at the origin) and separates the double-stranded (ds)DNA. Forms a right-handed helical filament on oriC DNA; dsDNA binds to the exterior of the filament while single-stranded (ss)DNA is stabiized in the filament's interior. The ATP-DnaA-oriC complex binds and stabilizes one strand of the AT-rich DNA unwinding element (DUE), permitting loading of DNA polymerase. After initiation quickly degrades to an ADP-DnaA complex that is not apt for DNA replication. Binds acidic phospholipids. The polypeptide is Chromosomal replication initiator protein DnaA (Rickettsia massiliae (strain Mtu5)).